The following is a 217-amino-acid chain: Large ribosomal subunit protein uL3 (217 aa).

Residues 129–162 (SRGPMSHGSKNHRAPGSTGAGTTPGRIYPGKRMA) form a disordered region. Positions 142 to 153 (APGSTGAGTTPG) are enriched in low complexity.

The protein belongs to the universal ribosomal protein uL3 family. Part of the 50S ribosomal subunit. Forms a cluster with proteins L14 and L19.

Functionally, one of the primary rRNA binding proteins, it binds directly near the 3'-end of the 23S rRNA, where it nucleates assembly of the 50S subunit. The protein is Large ribosomal subunit protein uL3 of Prochlorococcus marinus (strain MIT 9215).